The sequence spans 91 residues: Elongation factor 1-beta (91 aa).

The protein belongs to the EF-1-beta/EF-1-delta family.

Functionally, promotes the exchange of GDP for GTP in EF-1-alpha/GDP, thus allowing the regeneration of EF-1-alpha/GTP that could then be used to form the ternary complex EF-1-alpha/GTP/AAtRNA. This is Elongation factor 1-beta from Thermococcus gammatolerans (strain DSM 15229 / JCM 11827 / EJ3).